We begin with the raw amino-acid sequence, 316 residues long: HPr kinase/phosphorylase (316 aa).

Residues His-146 and Lys-167 contribute to the active site. Residue 161–168 (GESGLGKS) coordinates ATP. Ser-168 contacts Mg(2+). The active-site Proton acceptor; for phosphorylation activity. Proton donor; for dephosphorylation activity is Asp-185. The interval 209–218 (LEVRGIGLLD) is important for the catalytic mechanism of both phosphorylation and dephosphorylation. Position 210 (Glu-210) interacts with Mg(2+). Arg-252 is a catalytic residue. An important for the catalytic mechanism of dephosphorylation region spans residues 273–278 (QVEAGR).

Belongs to the HPrK/P family. As to quaternary structure, homohexamer. Mg(2+) serves as cofactor.

The catalysed reaction is [HPr protein]-L-serine + ATP = [HPr protein]-O-phospho-L-serine + ADP + H(+). It carries out the reaction [HPr protein]-O-phospho-L-serine + phosphate + H(+) = [HPr protein]-L-serine + diphosphate. Its function is as follows. Catalyzes the ATP- as well as the pyrophosphate-dependent phosphorylation of a specific serine residue in HPr, a phosphocarrier protein of the phosphoenolpyruvate-dependent sugar phosphotransferase system (PTS). HprK/P also catalyzes the pyrophosphate-producing, inorganic phosphate-dependent dephosphorylation (phosphorolysis) of seryl-phosphorylated HPr (P-Ser-HPr). This Polaromonas sp. (strain JS666 / ATCC BAA-500) protein is HPr kinase/phosphorylase.